The chain runs to 206 residues: Ras-related protein RABH1a (206 aa).

A GTP-binding site is contributed by 14–21 (GDQGVGKT). Residues 36–44 (YQATIGIDF) carry the Effector region motif. GTP contacts are provided by residues 62-66 (DTAGQ), 120-123 (NKTD), and 150-151 (SA). 2 S-geranylgeranyl cysteine lipidation sites follow: Cys-204 and Cys-206. Cysteine methyl ester is present on Cys-206.

It belongs to the small GTPase superfamily. Rab family.

The protein resides in the golgi apparatus membrane. Protein transport. Regulator of membrane traffic from the Golgi apparatus towards the endoplasmic reticulum (ER). The polypeptide is Ras-related protein RABH1a (RABH1A) (Arabidopsis thaliana (Mouse-ear cress)).